Reading from the N-terminus, the 200-residue chain is Peptidyl-tRNA hydrolase (200 aa).

Tyr15 is a binding site for tRNA. His20 serves as the catalytic Proton acceptor. TRNA-binding residues include Phe66, Asn68, and Asn114.

It belongs to the PTH family. Monomer.

It localises to the cytoplasm. The catalysed reaction is an N-acyl-L-alpha-aminoacyl-tRNA + H2O = an N-acyl-L-amino acid + a tRNA + H(+). Functionally, hydrolyzes ribosome-free peptidyl-tRNAs (with 1 or more amino acids incorporated), which drop off the ribosome during protein synthesis, or as a result of ribosome stalling. In terms of biological role, catalyzes the release of premature peptidyl moieties from peptidyl-tRNA molecules trapped in stalled 50S ribosomal subunits, and thus maintains levels of free tRNAs and 50S ribosomes. This is Peptidyl-tRNA hydrolase from Ralstonia pickettii (strain 12J).